A 315-amino-acid polypeptide reads, in one-letter code: Putative heme-binding peroxidase (315 aa).

H40 acts as the Proton acceptor in catalysis. A heme b-binding site is contributed by H169. W185 acts as the Tryptophan radical intermediate in catalysis. The interval 267-286 (EEGKPLDKTAPPAGDETCPV) is disordered.

The protein belongs to the peroxidase family. Cytochrome c peroxidase subfamily. Requires heme b as cofactor.

Functionally, destroys radicals which are normally produced within the cells and which are toxic to biological systems. This chain is Putative heme-binding peroxidase, found in Cryptococcus neoformans var. neoformans serotype D (strain B-3501A) (Filobasidiella neoformans).